The primary structure comprises 146 residues: Angiogenin (146 aa).

Residues 1–24 (MVMGLGLFLLVFMLGLGLTPPTLA) form the signal peptide. Pyrrolidone carboxylic acid is present on glutamine 25. Residue histidine 37 is the Proton acceptor of the active site. Residue arginine 45 participates in tRNA binding. 3 cysteine pairs are disulfide-bonded: cysteine 50-cysteine 105, cysteine 63-cysteine 116, and cysteine 81-cysteine 131. Residues 55-59 (RRRGL) carry the Nucleolar localization signal motif. TRNA is bound by residues cysteine 105 and isoleucine 127. Catalysis depends on histidine 138, which acts as the Proton donor.

Belongs to the pancreatic ribonuclease family. As to quaternary structure, homodimer. Interacts with RNH1; inhibiting ANG ribonuclease activity. Interacts with PCNA.

It localises to the secreted. The protein resides in the nucleus. Its subcellular location is the nucleolus. The protein localises to the cytoplasm. It is found in the stress granule. With respect to regulation, has weak tRNA ribonuclease activity by itself due to partial autoinhibition by its C-terminus, which folds into a short alpha-helix that partially occludes the substrate-binding site. In absence of stress, the ribonuclease activity is inhibited by RNH1 in the cytoplasm. In response to stress, dissociates from RNH1 in the cytoplasm and associates with cytoplasmic ribosomes with vacant A-sites: ribosomes directly activate the tRNA ribonuclease activity of ANG by refolding the C-terminal alpha-helix. In response to stress, the angiogenic activity of ANG is inhibited by RNH1 in the nucleus. In terms of biological role, secreted ribonuclease that can either promote or restrict cell proliferation of target cells, depending on the context. Endocytosed in target cells via its receptor PLXNB2 and translocates to the cytoplasm or nucleus. Under stress conditions, localizes to the cytoplasm and promotes the assembly of stress granules (SGs): specifically cleaves a subset of tRNAs within anticodon loops to produce tRNA-derived stress-induced fragments (tiRNAs), resulting in translation repression and inhibition of cell proliferation. tiRNas also prevent formation of apoptosome, thereby promoting cell survival. Preferentially cleaves RNAs between a pyrimidine and an adenosine residue, suggesting that it cleaves the anticodon loop of tRNA(Ala) (32-UUAGCAU-38) after positions 33 and 36. Cleaves a subset of tRNAs, including tRNA(Ala), tRNA(Glu), tRNA(Gly), tRNA(Lys), tRNA(Val), tRNA(His), tRNA(Asp) and tRNA(Sec). Under growth conditions and in differentiated cells, translocates to the nucleus and stimulates ribosomal RNA (rRNA) transcription, including that containing the initiation site sequences of 45S rRNA, thereby promoting cell growth and proliferation. Angiogenin induces vascularization of normal and malignant tissues via its ability to promote rRNA transcription. Involved in hematopoietic stem and progenitor cell (HSPC) growth and survival by promoting rRNA transcription in growth conditions and inhibiting translation in response to stress, respectively. Mediates the crosstalk between myeloid and intestinal epithelial cells to protect the intestinal epithelial barrier integrity: secreted by myeloid cells and promotes intestinal epithelial cells proliferation and survival. Also mediates osteoclast-endothelial cell crosstalk in growing bone: produced by osteoclasts and protects the neighboring vascular cells against senescence by promoting rRNA transcription. The polypeptide is Angiogenin (ANG) (Rhinopithecus avunculus (Tonkin snub-nosed monkey)).